A 408-amino-acid chain; its full sequence is MAENFVVVDGGVVAPKGFKSNGHKDRKYGAALIYSETDAVAAGVFTTNKVFAHPVALSKDVLVNNNVFRAIVANSGNANCFTKGGMEDAELLVKKAAELLKIPENQVLSASTGVIGRKMPMDIITLEVERAFENMDLENSNENASKAIMTTDAFPKTVAVEFEVKDKKIRIGGIAKGAGMIAPNMLHATMLGFITTDIEISKEDLTNSLQKATDESFNNAVVDGDMSTNDTVYVLANAQSGVKYTDCKDEFDEALTYVSKELAKMIVSDGEGAKKLIEATVYGAETKEDAKKASMSIVRSLLLKTAFFGADPNWGRIAAAVGYSGAEMDMANFDIIIGDISSEKQAILVKAGEQIADCGTPELKLAEEIMKEDKIKIIVDLKMGSFENTAFGCDLGYEYVKINSEYTT.

The substrate site is built by threonine 150, lysine 176, threonine 189, glutamate 271, asparagine 403, and threonine 408. The active-site Nucleophile is the threonine 189.

Belongs to the ArgJ family. As to quaternary structure, heterotetramer of two alpha and two beta chains.

The protein localises to the cytoplasm. The enzyme catalyses N(2)-acetyl-L-ornithine + L-glutamate = N-acetyl-L-glutamate + L-ornithine. Its pathway is amino-acid biosynthesis; L-arginine biosynthesis; L-ornithine and N-acetyl-L-glutamate from L-glutamate and N(2)-acetyl-L-ornithine (cyclic): step 1/1. Its function is as follows. Catalyzes the transfer of the acetyl group from N(2)-acetylornithine to glutamate, forming N-acetylglutamate and L-ornithine. In Methanococcus maripaludis (strain C5 / ATCC BAA-1333), this protein is Glutamate N-acetyltransferase.